Reading from the N-terminus, the 258-residue chain is Imidazole glycerol phosphate synthase subunit HisF (258 aa).

Residues D11 and D130 contribute to the active site.

The protein belongs to the HisA/HisF family. In terms of assembly, heterodimer of HisH and HisF.

It localises to the cytoplasm. The catalysed reaction is 5-[(5-phospho-1-deoxy-D-ribulos-1-ylimino)methylamino]-1-(5-phospho-beta-D-ribosyl)imidazole-4-carboxamide + L-glutamine = D-erythro-1-(imidazol-4-yl)glycerol 3-phosphate + 5-amino-1-(5-phospho-beta-D-ribosyl)imidazole-4-carboxamide + L-glutamate + H(+). It functions in the pathway amino-acid biosynthesis; L-histidine biosynthesis; L-histidine from 5-phospho-alpha-D-ribose 1-diphosphate: step 5/9. In terms of biological role, IGPS catalyzes the conversion of PRFAR and glutamine to IGP, AICAR and glutamate. The HisF subunit catalyzes the cyclization activity that produces IGP and AICAR from PRFAR using the ammonia provided by the HisH subunit. This is Imidazole glycerol phosphate synthase subunit HisF from Edwardsiella ictaluri (strain 93-146).